The primary structure comprises 430 residues: Dihydroorotase (430 aa).

Zn(2+) contacts are provided by His-61 and His-63. Substrate contacts are provided by residues 63 to 65 (HLR) and Asn-95. The Zn(2+) site is built by Asp-153, His-180, and His-233. Position 279 (Asn-279) interacts with substrate. Asp-306 contacts Zn(2+). Residue Asp-306 is part of the active site. Residues His-310 and 324 to 325 (FG) contribute to the substrate site.

Belongs to the metallo-dependent hydrolases superfamily. DHOase family. Class I DHOase subfamily. Requires Zn(2+) as cofactor.

The enzyme catalyses (S)-dihydroorotate + H2O = N-carbamoyl-L-aspartate + H(+). The protein operates within pyrimidine metabolism; UMP biosynthesis via de novo pathway; (S)-dihydroorotate from bicarbonate: step 3/3. Its function is as follows. Catalyzes the reversible cyclization of carbamoyl aspartate to dihydroorotate. The chain is Dihydroorotase from Lactiplantibacillus plantarum (strain ATCC BAA-793 / NCIMB 8826 / WCFS1) (Lactobacillus plantarum).